A 232-amino-acid chain; its full sequence is Octanoyltransferase (232 aa).

The region spanning 44–219 (EHTGDELWVV…QLARQFGLVL (176 aa)) is the BPL/LPL catalytic domain. Residues 83 to 90 (RGGQVTYH), 150 to 152 (ALG), and 163 to 165 (GLS) each bind substrate. Residue Cys-181 is the Acyl-thioester intermediate of the active site.

The protein belongs to the LipB family.

Its subcellular location is the cytoplasm. The catalysed reaction is octanoyl-[ACP] + L-lysyl-[protein] = N(6)-octanoyl-L-lysyl-[protein] + holo-[ACP] + H(+). It functions in the pathway protein modification; protein lipoylation via endogenous pathway; protein N(6)-(lipoyl)lysine from octanoyl-[acyl-carrier-protein]: step 1/2. Functionally, catalyzes the transfer of endogenously produced octanoic acid from octanoyl-acyl-carrier-protein onto the lipoyl domains of lipoate-dependent enzymes. Lipoyl-ACP can also act as a substrate although octanoyl-ACP is likely to be the physiological substrate. This Xanthomonas campestris pv. campestris (strain 8004) protein is Octanoyltransferase.